The following is a 271-amino-acid chain: Pyrroline-5-carboxylate reductase (271 aa).

Belongs to the pyrroline-5-carboxylate reductase family.

The protein localises to the cytoplasm. It carries out the reaction L-proline + NADP(+) = (S)-1-pyrroline-5-carboxylate + NADPH + 2 H(+). The enzyme catalyses L-proline + NAD(+) = (S)-1-pyrroline-5-carboxylate + NADH + 2 H(+). The protein operates within amino-acid biosynthesis; L-proline biosynthesis; L-proline from L-glutamate 5-semialdehyde: step 1/1. In terms of biological role, catalyzes the reduction of 1-pyrroline-5-carboxylate (PCA) to L-proline. The protein is Pyrroline-5-carboxylate reductase of Staphylococcus aureus (strain Mu50 / ATCC 700699).